Consider the following 257-residue polypeptide: Metallo-beta-lactamase type 2 (257 aa).

The N-terminal stretch at 1-30 (MKKNTLLKVGLCVSLLGTTQFVSTISSVQA) is a signal peptide. Zn(2+) contacts are provided by His116, His118, Asp120, His179, and Cys198. Substrate is bound by residues Lys201 and Asn210. His240 contributes to the Zn(2+) binding site.

The protein belongs to the metallo-beta-lactamase superfamily. Class-B beta-lactamase family. In terms of assembly, monomer. It depends on Zn(2+) as a cofactor.

It is found in the periplasm. The enzyme catalyses a beta-lactam + H2O = a substituted beta-amino acid. In terms of biological role, confers resistance to the different beta-lactams antibiotics (penicillin, cephalosporin and carbapenem) via the hydrolysis of the beta-lactam ring. This chain is Metallo-beta-lactamase type 2, found in Bacillus sp. (strain 170).